The following is an 883-amino-acid chain: Phosphoenolpyruvate carboxylase (883 aa).

Active-site residues include histidine 138 and lysine 546.

Belongs to the PEPCase type 1 family. The cofactor is Mg(2+).

It catalyses the reaction oxaloacetate + phosphate = phosphoenolpyruvate + hydrogencarbonate. Functionally, forms oxaloacetate, a four-carbon dicarboxylic acid source for the tricarboxylic acid cycle. This is Phosphoenolpyruvate carboxylase from Escherichia coli O45:K1 (strain S88 / ExPEC).